The chain runs to 97 residues: UPF0235 protein Daro_3887 (97 aa).

This sequence belongs to the UPF0235 family.

This Dechloromonas aromatica (strain RCB) protein is UPF0235 protein Daro_3887.